The sequence spans 508 residues: Probable ligand-gated ion channel 46 (508 aa).

The N-terminal stretch at 1–18 (MQYLQFLSLVVLLLMCHA) is a signal peptide. The Extracellular portion of the chain corresponds to 19 to 274 (RKSVYRRNSP…FEFKRRAGWY (256 aa)). N-linked (GlcNAc...) asparagine glycans are attached at residues asparagine 65, asparagine 134, asparagine 175, and asparagine 201. A disulfide bridge links cysteine 190 with cysteine 204. Residues 275 to 295 (ILQAYLPTYLTICISWISFAL) form a helical membrane-spanning segment. The Cytoplasmic segment spans residues 296 to 301 (GSKAIP). Residues 302–321 (ARTMLGVNSLLAMTFQFGNI) form a helical membrane-spanning segment. Over 322 to 335 (IRNLPRVSYVKAID) the chain is Extracellular. The helical transmembrane segment at 336–356 (VWMLSCMTFVFCSLLELAWVG) threads the bilayer. Over 357–480 (YLSREEEPTS…KQRREILAHK (124 aa)) the chain is Cytoplasmic. Residues 374–407 (AQVAPKPCHPPPVQQNANNSSVHRRQKQPKNEEE) form a disordered region. A helical membrane pass occupies residues 481-501 (IDSVSVFMFPFLFVLFNIAYW). Residues 502-508 (QHYLRGY) are Extracellular-facing.

It belongs to the ligand-gated ion channel (TC 1.A.9) family. As to expression, expressed in the nervous system, with high expression in cholinergic motor neurons and weak expression in GABAergic motor neurons.

The protein localises to the presynaptic cell membrane. The protein resides in the cell projection. Its subcellular location is the axon. It is found in the cytoplasmic vesicle. It localises to the secretory vesicle. The protein localises to the synaptic vesicle. Probable component of a ligand-gated anion channel. Negatively regulates synaptic transmission and synaptic vesicle release in response to acetylcholine in cholinergic motor neurons. Role in synaptic vesicle release kinetics may be in association with the ligand-gated ion channel protein acc-4. The polypeptide is Probable ligand-gated ion channel 46 (Caenorhabditis elegans).